Reading from the N-terminus, the 101-residue chain is Small ribosomal subunit protein uS14 (101 aa).

The protein belongs to the universal ribosomal protein uS14 family. As to quaternary structure, part of the 30S ribosomal subunit. Contacts proteins S3 and S10.

Its function is as follows. Binds 16S rRNA, required for the assembly of 30S particles and may also be responsible for determining the conformation of the 16S rRNA at the A site. The protein is Small ribosomal subunit protein uS14 of Proteus mirabilis (strain HI4320).